We begin with the raw amino-acid sequence, 450 residues long: Putative receptor-like protein kinase At1g72540 (450 aa).

Thr-73 is subject to Phosphothreonine. A Protein kinase domain is found at Phe-84–Leu-365. ATP contacts are provided by residues Leu-90–Val-98 and Lys-119. The residue at position 164 (Tyr-164) is a Phosphotyrosine. The active-site Proton acceptor is Asp-214. At Ser-218 the chain carries Phosphoserine. Residue Thr-254 is modified to Phosphothreonine. Residue Tyr-262 is modified to Phosphotyrosine.

Belongs to the protein kinase superfamily. Ser/Thr protein kinase family.

The enzyme catalyses L-seryl-[protein] + ATP = O-phospho-L-seryl-[protein] + ADP + H(+). It carries out the reaction L-threonyl-[protein] + ATP = O-phospho-L-threonyl-[protein] + ADP + H(+). The sequence is that of Putative receptor-like protein kinase At1g72540 from Arabidopsis thaliana (Mouse-ear cress).